Consider the following 238-residue polypeptide: 1-(5-phosphoribosyl)-5-[(5-phosphoribosylamino)methylideneamino] imidazole-4-carboxamide isomerase (238 aa).

Residue D8 is the Proton acceptor of the active site. The active-site Proton donor is D129.

It belongs to the HisA/HisF family.

It localises to the cytoplasm. It catalyses the reaction 1-(5-phospho-beta-D-ribosyl)-5-[(5-phospho-beta-D-ribosylamino)methylideneamino]imidazole-4-carboxamide = 5-[(5-phospho-1-deoxy-D-ribulos-1-ylimino)methylamino]-1-(5-phospho-beta-D-ribosyl)imidazole-4-carboxamide. It participates in amino-acid biosynthesis; L-histidine biosynthesis; L-histidine from 5-phospho-alpha-D-ribose 1-diphosphate: step 4/9. The polypeptide is 1-(5-phosphoribosyl)-5-[(5-phosphoribosylamino)methylideneamino] imidazole-4-carboxamide isomerase (Anaeromyxobacter sp. (strain Fw109-5)).